A 492-amino-acid chain; its full sequence is Bifunctional purine biosynthesis protein PurH (492 aa).

The 144-residue stretch at 1–144 (MKKAILSVSN…KNFKHVITVV (144 aa)) folds into the MGS-like domain.

This sequence belongs to the PurH family.

It carries out the reaction (6R)-10-formyltetrahydrofolate + 5-amino-1-(5-phospho-beta-D-ribosyl)imidazole-4-carboxamide = 5-formamido-1-(5-phospho-D-ribosyl)imidazole-4-carboxamide + (6S)-5,6,7,8-tetrahydrofolate. The enzyme catalyses IMP + H2O = 5-formamido-1-(5-phospho-D-ribosyl)imidazole-4-carboxamide. Its pathway is purine metabolism; IMP biosynthesis via de novo pathway; 5-formamido-1-(5-phospho-D-ribosyl)imidazole-4-carboxamide from 5-amino-1-(5-phospho-D-ribosyl)imidazole-4-carboxamide (10-formyl THF route): step 1/1. The protein operates within purine metabolism; IMP biosynthesis via de novo pathway; IMP from 5-formamido-1-(5-phospho-D-ribosyl)imidazole-4-carboxamide: step 1/1. The chain is Bifunctional purine biosynthesis protein PurH from Staphylococcus saprophyticus subsp. saprophyticus (strain ATCC 15305 / DSM 20229 / NCIMB 8711 / NCTC 7292 / S-41).